The primary structure comprises 185 residues: MINEIKKDAQERMEKSVEALKNNLLKIRTGRAHPSLLSGISVEYYGAQTPLNQVANVVAEDSRTLAITVFDKELAGLVEKAIMMSDLGLNPMSAGTVIRVPLPPLTEERRKDLVKIVRGEAENGRVAIRNIRRDANGDVKALLKEKEISEDDDRRAQDEIQKLTDAAVKSIDEVLAVKEKELMEV.

The protein belongs to the RRF family.

The protein localises to the cytoplasm. Responsible for the release of ribosomes from messenger RNA at the termination of protein biosynthesis. May increase the efficiency of translation by recycling ribosomes from one round of translation to another. This is Ribosome-recycling factor from Aliivibrio fischeri (strain ATCC 700601 / ES114) (Vibrio fischeri).